The following is a 294-amino-acid chain: Tryptophan 2,3-dioxygenase (294 aa).

Residues 1-20 form a disordered region; that stretch reads MSEFKGCPFSGAASEAGTKA. Substrate contacts are provided by residues 63-67, Tyr-125, and Arg-129; that span reads FIVQH. His-252 is a heme binding site. Thr-266 contacts substrate.

It belongs to the tryptophan 2,3-dioxygenase family. As to quaternary structure, homotetramer. It depends on heme as a cofactor.

It catalyses the reaction L-tryptophan + O2 = N-formyl-L-kynurenine. Its pathway is amino-acid degradation; L-tryptophan degradation via kynurenine pathway; L-kynurenine from L-tryptophan: step 1/2. Heme-dependent dioxygenase that catalyzes the oxidative cleavage of the L-tryptophan (L-Trp) pyrrole ring and converts L-tryptophan to N-formyl-L-kynurenine. Catalyzes the oxidative cleavage of the indole moiety. The polypeptide is Tryptophan 2,3-dioxygenase (Cupriavidus necator (strain ATCC 17699 / DSM 428 / KCTC 22496 / NCIMB 10442 / H16 / Stanier 337) (Ralstonia eutropha)).